The primary structure comprises 360 residues: Phospho-N-acetylmuramoyl-pentapeptide-transferase (360 aa).

A run of 10 helical transmembrane segments spans residues 27 to 47, 72 to 92, 94 to 114, 135 to 155, 167 to 187, 199 to 219, 236 to 256, 263 to 283, 289 to 309, and 337 to 357; these read GAIA…IKSL, TPTM…LLWA, LSNH…AIGF, LACE…LGTP, GYVV…IVAS, GLAI…AYLV, AGEL…FLWF, IFMG…IAVA, VLAI…VQVV, and QVVV…LSTL.

The protein belongs to the glycosyltransferase 4 family. MraY subfamily. The cofactor is Mg(2+).

It is found in the cell inner membrane. It carries out the reaction UDP-N-acetyl-alpha-D-muramoyl-L-alanyl-gamma-D-glutamyl-meso-2,6-diaminopimeloyl-D-alanyl-D-alanine + di-trans,octa-cis-undecaprenyl phosphate = di-trans,octa-cis-undecaprenyl diphospho-N-acetyl-alpha-D-muramoyl-L-alanyl-D-glutamyl-meso-2,6-diaminopimeloyl-D-alanyl-D-alanine + UMP. Its pathway is cell wall biogenesis; peptidoglycan biosynthesis. Its function is as follows. Catalyzes the initial step of the lipid cycle reactions in the biosynthesis of the cell wall peptidoglycan: transfers peptidoglycan precursor phospho-MurNAc-pentapeptide from UDP-MurNAc-pentapeptide onto the lipid carrier undecaprenyl phosphate, yielding undecaprenyl-pyrophosphoryl-MurNAc-pentapeptide, known as lipid I. The chain is Phospho-N-acetylmuramoyl-pentapeptide-transferase from Beijerinckia indica subsp. indica (strain ATCC 9039 / DSM 1715 / NCIMB 8712).